A 143-amino-acid polypeptide reads, in one-letter code: Turripeptide VIII-01 (143 aa).

Positions 1–23 (MALSLDILMSVTMVTAVLTTVNA) are cleaved as a signal peptide. Residues 24–32 (EYKDSRLDS) constitute a propeptide that is removed on maturation.

In terms of processing, contains 4 disulfide bonds. Expressed by the venom duct.

It is found in the secreted. The chain is Turripeptide VIII-01 from Gemmula speciosa (Splendid gem-turris).